The sequence spans 319 residues: F-box only protein 8 (319 aa).

The F-box domain occupies 68-111 (FINLEMLPPELSFTILSYLNATDLCLASCVWQDLANDELLWQGL). Positions 146–276 (FNANPDEGVN…LILLSIDLTS (131 aa)) constitute an SEC7 domain.

In terms of biological role, may promote guanine-nucleotide exchange on an ARF. Promotes the activation of ARF through replacement of GDP with GTP (Potential). The protein is F-box only protein 8 (FBXO8) of Bos taurus (Bovine).